Here is a 599-residue protein sequence, read N- to C-terminus: Elongation factor 4 (599 aa).

The tr-type G domain maps to 2–184 (KNIRNFSIIA…RLVRDIPPPE (183 aa)). Residues 14–19 (DHGKST) and 131–134 (NKID) contribute to the GTP site.

This sequence belongs to the TRAFAC class translation factor GTPase superfamily. Classic translation factor GTPase family. LepA subfamily.

The protein resides in the cell inner membrane. The enzyme catalyses GTP + H2O = GDP + phosphate + H(+). Functionally, required for accurate and efficient protein synthesis under certain stress conditions. May act as a fidelity factor of the translation reaction, by catalyzing a one-codon backward translocation of tRNAs on improperly translocated ribosomes. Back-translocation proceeds from a post-translocation (POST) complex to a pre-translocation (PRE) complex, thus giving elongation factor G a second chance to translocate the tRNAs correctly. Binds to ribosomes in a GTP-dependent manner. This is Elongation factor 4 from Citrobacter koseri (strain ATCC BAA-895 / CDC 4225-83 / SGSC4696).